Reading from the N-terminus, the 445-residue chain is Phosphoglucosamine mutase (445 aa).

The active-site Phosphoserine intermediate is the Ser102. Residues Ser102, Asp240, Asp242, and Asp244 each contribute to the Mg(2+) site. Ser102 bears the Phosphoserine mark.

The protein belongs to the phosphohexose mutase family. It depends on Mg(2+) as a cofactor. In terms of processing, activated by phosphorylation.

It catalyses the reaction alpha-D-glucosamine 1-phosphate = D-glucosamine 6-phosphate. Catalyzes the conversion of glucosamine-6-phosphate to glucosamine-1-phosphate. In Mycobacterium marinum (strain ATCC BAA-535 / M), this protein is Phosphoglucosamine mutase.